The sequence spans 409 residues: 2,3-bisphosphoglycerate-independent phosphoglycerate mutase 1 (409 aa).

The segment covering 163–173 (SDADPKVEGKP) has biased composition (basic and acidic residues). Positions 163-184 (SDADPKVEGKPPKKIKALDGSP) are disordered.

It belongs to the BPG-independent phosphoglycerate mutase family. A-PGAM subfamily.

It catalyses the reaction (2R)-2-phosphoglycerate = (2R)-3-phosphoglycerate. Its pathway is carbohydrate degradation; glycolysis; pyruvate from D-glyceraldehyde 3-phosphate: step 3/5. Functionally, catalyzes the interconversion of 2-phosphoglycerate and 3-phosphoglycerate. The polypeptide is 2,3-bisphosphoglycerate-independent phosphoglycerate mutase 1 (apgM1) (Methanothermobacter thermautotrophicus (strain ATCC 29096 / DSM 1053 / JCM 10044 / NBRC 100330 / Delta H) (Methanobacterium thermoautotrophicum)).